Reading from the N-terminus, the 316-residue chain is Large ribosomal subunit protein uL10 (316 aa).

Residues 282–316 form a disordered region; the sequence is ASAAKADEPKKEEAKKVEEEEEEEEDGFMGFGMFD. Positions 286–299 are enriched in basic and acidic residues; that stretch reads KADEPKKEEAKKVE.

Belongs to the universal ribosomal protein uL10 family. P0 forms a pentameric complex by interaction with dimers of P1 and P2. In terms of processing, phosphorylated.

Its function is as follows. Ribosomal protein P0 is the functional equivalent of E.coli protein L10. This chain is Large ribosomal subunit protein uL10 (RPLP0), found in Plasmodium falciparum (isolate 7G8).